Consider the following 343-residue polypeptide: Phospholipid phosphatase-related protein type 2 (343 aa).

Transmembrane regions (helical) follow at residues 12–32, 69–89, and 129–149; these read FSIIPCFVFVESVLLGIVILL, VPPALVYALVTAGPTLTILLG, and FLGVYSFGLFTTTIFANAGQV. N-linked (GlcNAc...) asparagine glycosylation is present at Asn-165. The next 3 membrane-spanning stretches (helical) occupy residues 210 to 230, 239 to 259, and 266 to 286; these read AALCAYAVTYTAMYVTLVFRV, SLCLALLCPAFLVGVVRVAEY, and VLAGFLTGAAIATFLVTCVVH. A disordered region spans residues 290 to 343; that stretch reads SRPPSGRRLSPWEDLGQAPTMDSPLEKNPRSAGRIRHRHGSPHPSRRTAPAVAT. A phosphoserine mark is found at Ser-299 and Ser-312. The segment covering 322-335 has biased composition (basic residues); that stretch reads GRIRHRHGSPHPSR.

The protein belongs to the PA-phosphatase related phosphoesterase family.

It is found in the membrane. The protein is Phospholipid phosphatase-related protein type 2 of Homo sapiens (Human).